The sequence spans 227 residues: uncharacterized protein (227 aa).

To ORF5 in pFZ1.

This is an uncharacterized protein from Methanothermobacter thermautotrophicus (Methanobacterium thermoformicicum).